Here is a 280-residue protein sequence, read N- to C-terminus: Adenosylcobinamide-GDP ribazoletransferase (280 aa).

Helical transmembrane passes span Y4–M24, I34–A54, V58–F78, T108–I128, I136–V156, L197–I217, and I254–G274.

This sequence belongs to the CobS family. The cofactor is Mg(2+).

The protein localises to the cell membrane. It catalyses the reaction alpha-ribazole + adenosylcob(III)inamide-GDP = adenosylcob(III)alamin + GMP + H(+). It carries out the reaction alpha-ribazole 5'-phosphate + adenosylcob(III)inamide-GDP = adenosylcob(III)alamin 5'-phosphate + GMP + H(+). The protein operates within cofactor biosynthesis; adenosylcobalamin biosynthesis; adenosylcobalamin from cob(II)yrinate a,c-diamide: step 7/7. Functionally, joins adenosylcobinamide-GDP and alpha-ribazole to generate adenosylcobalamin (Ado-cobalamin). Also synthesizes adenosylcobalamin 5'-phosphate from adenosylcobinamide-GDP and alpha-ribazole 5'-phosphate. In Methanosarcina mazei (strain ATCC BAA-159 / DSM 3647 / Goe1 / Go1 / JCM 11833 / OCM 88) (Methanosarcina frisia), this protein is Adenosylcobinamide-GDP ribazoletransferase.